Here is a 234-residue protein sequence, read N- to C-terminus: Thiamine import ATP-binding protein ThiQ (234 aa).

The ABC transporter domain occupies Leu2–Leu230. Position 32–39 (Gly32–Ser39) interacts with ATP.

The protein belongs to the ABC transporter superfamily. Thiamine importer (TC 3.A.1.19.1) family. The complex is composed of two ATP-binding proteins (ThiQ), two transmembrane proteins (ThiP) and a solute-binding protein (ThiB).

The protein resides in the cell inner membrane. The enzyme catalyses thiamine(out) + ATP + H2O = thiamine(in) + ADP + phosphate + H(+). Functionally, part of the ABC transporter complex ThiBPQ involved in thiamine import. Responsible for energy coupling to the transport system. This Aliivibrio fischeri (strain ATCC 700601 / ES114) (Vibrio fischeri) protein is Thiamine import ATP-binding protein ThiQ.